We begin with the raw amino-acid sequence, 510 residues long: NAD(P)H-quinone oxidoreductase subunit 2 B, chloroplastic (510 aa).

13 consecutive transmembrane segments (helical) span residues 24–44 (LLLF…GLIL), 57–77 (IPWL…ALLF), 99–119 (IFQF…VEYI), 124–144 (MAIT…MFLC), 150–170 (ITIF…SGYT), 183–203 (YLLM…WLYG), 227–247 (PGIS…LSPA), 295–315 (WHLL…LIAI), 323–343 (MLAY…IVGD), 347–367 (GYAS…GTFA), 395–415 (ALSS…AGFF), 418–438 (LHLF…IGLL), and 484–504 (MIVC…IIAI).

Belongs to the complex I subunit 2 family. In terms of assembly, NDH is composed of at least 16 different subunits, 5 of which are encoded in the nucleus.

Its subcellular location is the plastid. The protein localises to the chloroplast thylakoid membrane. The enzyme catalyses a plastoquinone + NADH + (n+1) H(+)(in) = a plastoquinol + NAD(+) + n H(+)(out). The catalysed reaction is a plastoquinone + NADPH + (n+1) H(+)(in) = a plastoquinol + NADP(+) + n H(+)(out). In terms of biological role, NDH shuttles electrons from NAD(P)H:plastoquinone, via FMN and iron-sulfur (Fe-S) centers, to quinones in the photosynthetic chain and possibly in a chloroplast respiratory chain. The immediate electron acceptor for the enzyme in this species is believed to be plastoquinone. Couples the redox reaction to proton translocation, and thus conserves the redox energy in a proton gradient. The chain is NAD(P)H-quinone oxidoreductase subunit 2 B, chloroplastic from Liriodendron tulipifera (Tuliptree).